The sequence spans 260 residues: Snake venom serine proteinase 12 (260 aa).

The first 18 residues, 1-18, serve as a signal peptide directing secretion; sequence MVLIRVLANLLILQLSYA. The propeptide occupies 19–24; that stretch reads QKSSEL. The Peptidase S1 domain maps to 25-251; sequence VIGGDECNIN…HLDWIQSIIA (227 aa). 6 disulfides stabilise this stretch: Cys-31–Cys-163, Cys-50–Cys-66, Cys-98–Cys-258, Cys-142–Cys-212, Cys-174–Cys-191, and Cys-202–Cys-227. The active-site Charge relay system is His-65. N-linked (GlcNAc...) asparagine glycosylation occurs at Asn-103. The active-site Charge relay system is Asp-110. The active-site Charge relay system is the Ser-206.

Belongs to the peptidase S1 family. Snake venom subfamily. Monomer. Expressed by the venom gland.

Its subcellular location is the secreted. Its function is as follows. Snake venom serine protease that may act in the hemostasis system of the prey. The polypeptide is Snake venom serine proteinase 12 (Crotalus adamanteus (Eastern diamondback rattlesnake)).